A 653-amino-acid chain; its full sequence is tRNA uridine 5-carboxymethylaminomethyl modification enzyme MnmG (653 aa).

Residues 18 to 23, V130, and T195 contribute to the FAD site; that span reads GAGHAG. 287–301 is an NAD(+) binding site; the sequence is GPRYCPSIEDKVVRF. Q384 lines the FAD pocket. The disordered stretch occupies residues 624–653; sequence SQTKSSASVDKRASSDNESSRPTSSASDSL. Residues 632–642 show a composition bias toward basic and acidic residues; sequence VDKRASSDNES. The segment covering 643-653 has biased composition (polar residues); that stretch reads SRPTSSASDSL.

This sequence belongs to the MnmG family. Homodimer. Heterotetramer of two MnmE and two MnmG subunits. FAD serves as cofactor.

It localises to the cytoplasm. In terms of biological role, NAD-binding protein involved in the addition of a carboxymethylaminomethyl (cmnm) group at the wobble position (U34) of certain tRNAs, forming tRNA-cmnm(5)s(2)U34. This Rhodopirellula baltica (strain DSM 10527 / NCIMB 13988 / SH1) protein is tRNA uridine 5-carboxymethylaminomethyl modification enzyme MnmG.